We begin with the raw amino-acid sequence, 807 residues long: MNKFVSQSTIDTFFDGKHADPFSVLGMHETSNGIEVRVLLPDAEKVFVLSKETKNVLCELSRVDERGFFAGVVPNTHSFFAYQLEVYWGNEAQVIEDPYAFHPMINELDNWLLAEGSHKRPYEILGAHFTECDNVAGVNFRLWAPNAKRVSVVGDFNYWDGRRHPMRFHQSSGIWELFLPKVSLGQLYKFELLDCHNQLRLKADPYAFSSQLRPDTASQIGALPEIVSMTEKRRKANQADQPISIYEVHLGSWRRNLENNFWLDYDQIAEELIPYVKDMGFTHIELLPLSEFPFDGSWGYQPIGLYSPTSRFGTAEGFKRLVNKAHKAGINVILDWVPGHFPSDTHGLVAFDGTALYEHADPKEGYHQDWNTLIYNYGRHEVKNYLASNALYWMERFGLDGIRVDAVASMIYRDYSREDGQWIPNQYGGRENLEAIEFLKQTNHLLGTEIPGVVSIAEESTSFAGVTHPPYEGGLGFHFKWNMGWMNDTLSYMKKDPIYRQHHHSQMTFGMVYQYSENFILPLSHDEVVHGKCSLLGKMPGDAWQKFANLRAYYGYMWGYPGKKLLFMGNEFAQGREWNYQESLDWYLLDEFHGGGWHKAVQDYVRDLNHIYQKNAPLFELDTDPQGFEWLVVDDYQNSVFVFERRSKKDERIIVISNFTPVLRQNYRFGVNIAGEYMEILNSDAQQYMGSNSTNTSKIVTEDIESHNKAQSISIDIPPLATVYLKLHKVKKVRKMRKTSKVEDTAVKTEKKIAKGKTTRTKKTVADTVSEATEVKPKKTVTKRAVVKKVKNAEVIAESTSVENNVS.

Asp405 (nucleophile) is an active-site residue. Glu458 (proton donor) is an active-site residue.

This sequence belongs to the glycosyl hydrolase 13 family. GlgB subfamily. Monomer.

The enzyme catalyses Transfers a segment of a (1-&gt;4)-alpha-D-glucan chain to a primary hydroxy group in a similar glucan chain.. It functions in the pathway glycan biosynthesis; glycogen biosynthesis. Its function is as follows. Catalyzes the formation of the alpha-1,6-glucosidic linkages in glycogen by scission of a 1,4-alpha-linked oligosaccharide from growing alpha-1,4-glucan chains and the subsequent attachment of the oligosaccharide to the alpha-1,6 position. This is 1,4-alpha-glucan branching enzyme GlgB from Histophilus somni (strain 129Pt) (Haemophilus somnus).